The sequence spans 130 residues: Histone H2A type 1 (130 aa).

The interval 1 to 22 (MSGRGKQGGKARAKAKSRSSRA) is disordered. N-acetylserine is present on Ser2. Residue Ser2 is modified to Phosphoserine; by RPS6KA5. Arg4 carries the citrulline; alternate modification. A Symmetric dimethylarginine; by PRMT5; alternate modification is found at Arg4. Lys6 is modified (N6-(2-hydroxyisobutyryl)lysine). Positions 7-19 (QGGKARAKAKSRS) are enriched in basic residues. At Lys10 the chain carries N6-(2-hydroxyisobutyryl)lysine; alternate. Lys10 is subject to N6-lactoyllysine; alternate. N6-succinyllysine; alternate is present on Lys10. Residues Lys14 and Lys16 each participate in a glycyl lysine isopeptide (Lys-Gly) (interchain with G-Cter in ubiquitin) cross-link. Lys37 is modified (N6-(2-hydroxyisobutyryl)lysine; alternate). Lys37 is subject to N6-(beta-hydroxybutyryl)lysine; alternate. Lys37 carries the N6-crotonyllysine; alternate modification. N6-(2-hydroxyisobutyryl)lysine is present on residues Lys75 and Lys76. Residue Lys96 is modified to N6-(2-hydroxyisobutyryl)lysine; alternate. Lys96 is modified (N6-succinyllysine; alternate). The residue at position 96 (Lys96) is an N6-glutaryllysine; alternate. Lys100 is modified (N6-glutaryllysine). Gln105 is subject to N5-methylglutamine. Lys119 is subject to N6-(2-hydroxyisobutyryl)lysine; alternate. N6-crotonyllysine; alternate is present on residues Lys119 and Lys120. Residues Lys119 and Lys120 each carry the N6-glutaryllysine; alternate modification. Lys120 participates in a covalent cross-link: Glycyl lysine isopeptide (Lys-Gly) (interchain with G-Cter in ubiquitin); alternate. Thr121 bears the Phosphothreonine; by DCAF1 mark. Lys126 bears the N6-crotonyllysine; alternate mark. The residue at position 126 (Lys126) is an N6-glutaryllysine; alternate.

Belongs to the histone H2A family. The nucleosome is a histone octamer containing two molecules each of H2A, H2B, H3 and H4 assembled in one H3-H4 heterotetramer and two H2A-H2B heterodimers. The octamer wraps approximately 147 bp of DNA. Interacts with VRK1; the interaction is mediated by the nucleosome acidic patch, a cluster of negatively charged residues of H2A and H2B forming a cleft within the nucleosome core. Post-translationally, deiminated on Arg-4 in granulocytes upon calcium entry. Monoubiquitination of Lys-120 (H2AK119Ub) by RING1, TRIM37 and RNF2/RING2 complex gives a specific tag for epigenetic transcriptional repression and participates in X chromosome inactivation of female mammals. It is involved in the initiation of both imprinted and random X inactivation. Ubiquitinated H2A is enriched in inactive X chromosome chromatin. Ubiquitination of H2A functions downstream of methylation of 'Lys-27' of histone H3 (H3K27me). H2AK119Ub by RNF2/RING2 can also be induced by ultraviolet and may be involved in DNA repair. Following DNA double-strand breaks (DSBs), it is ubiquitinated through 'Lys-63' linkage of ubiquitin moieties by the E2 ligase UBE2N and the E3 ligases RNF8 and RNF168, leading to the recruitment of repair proteins to sites of DNA damage. Ubiquitination at Lys-14 and Lys-16 (H2AK13Ub and H2AK15Ub, respectively) in response to DNA damage is initiated by RNF168 that mediates monoubiquitination at these 2 sites, and 'Lys-63'-linked ubiquitin are then conjugated to monoubiquitin; RNF8 is able to extend 'Lys-63'-linked ubiquitin chains in vitro. H2AK119Ub and ionizing radiation-induced 'Lys-63'-linked ubiquitination (H2AK13Ub and H2AK15Ub) are distinct events. In terms of processing, phosphorylation on Ser-2 (H2AS1ph) is enhanced during mitosis. Phosphorylation on Ser-2 by RPS6KA5/MSK1 directly represses transcription. Acetylation of H3 inhibits Ser-2 phosphorylation by RPS6KA5/MSK1. Phosphorylation at Thr-121 (H2AT120ph) by DCAF1 is present in the regulatory region of many tumor suppresor genes and down-regulates their transcription. Post-translationally, symmetric dimethylation on Arg-4 by the PRDM1/PRMT5 complex may play a crucial role in the germ-cell lineage. Glutamine methylation at Gln-105 (H2AQ104me) by FBL is specifically dedicated to polymerase I. It is present at 35S ribosomal DNA locus and impairs binding of the FACT complex. In terms of processing, crotonylation (Kcr) is specifically present in male germ cells and marks testis-specific genes in post-meiotic cells, including X-linked genes that escape sex chromosome inactivation in haploid cells. Crotonylation marks active promoters and enhancers and confers resistance to transcriptional repressors. It is also associated with post-meiotically activated genes on autosomes. Post-translationally, lactylated in macrophages by EP300/P300 by using lactoyl-CoA directly derived from endogenous or exogenous lactate, leading to stimulates gene transcription.

Its subcellular location is the nucleus. It localises to the chromosome. Core component of nucleosome. Nucleosomes wrap and compact DNA into chromatin, limiting DNA accessibility to the cellular machineries which require DNA as a template. Histones thereby play a central role in transcription regulation, DNA repair, DNA replication and chromosomal stability. DNA accessibility is regulated via a complex set of post-translational modifications of histones, also called histone code, and nucleosome remodeling. The chain is Histone H2A type 1 from Rattus norvegicus (Rat).